A 1759-amino-acid polypeptide reads, in one-letter code: Protein TIC 214 (1759 aa).

A run of 5 helical transmembrane segments spans residues 23–45 (VVVG…LFLL), 64–84 (FITG…HLAL), 129–149 (IFFQ…SSIF), 172–192 (IGWI…LICI), and 221–241 (IFVV…PPPF).

It belongs to the TIC214 family. In terms of assembly, part of the Tic complex.

Its subcellular location is the plastid. The protein localises to the chloroplast inner membrane. Involved in protein precursor import into chloroplasts. May be part of an intermediate translocation complex acting as a protein-conducting channel at the inner envelope. The sequence is that of Protein TIC 214 from Phaseolus vulgaris (Kidney bean).